Here is a 174-residue protein sequence, read N- to C-terminus: Cytoglobin-1 (174 aa).

The Globin domain occupies 15-165 (SLTEEDVCVI…LYWQMNRVYA (151 aa)). Heme b contacts are provided by H78 and H110.

It belongs to the globin family. In terms of assembly, monomeric. Expressed in all tissues examined with highest levels in brain, eye, gut and heart.

The protein localises to the cytoplasm. It is found in the nucleus. It carries out the reaction Fe(II)-heme b-[protein] + nitric oxide + O2 = Fe(III)-heme b-[protein] + nitrate. The catalysed reaction is Fe(III)-heme b-[protein] + nitric oxide + H2O = Fe(II)-heme b-[protein] + nitrite + 2 H(+). The enzyme catalyses 2 superoxide + 2 H(+) = H2O2 + O2. It catalyses the reaction H2O2 + AH2 = A + 2 H2O. Functionally, probable multifunctional globin with a hexacoordinated heme iron required for the catalysis of various reactions depending on redox condition of the cell as well as oxygen availability. Has a nitric oxide dioxygenase (NOD) activity and is most probably involved in cell-mediated and oxygen-dependent nitric oxide consumption. Under normoxic conditions functions as a nitric oxide dioxygenase (NOD) but under hypoxic conditions the globin may switch its function to that of a nitrite (NO2) reductase (NiR), generating nitric oxide. Could also have peroxidase and superoxide dismutase activities, detoxifying reactive oxygen species and protecting cells against oxidative stress. Also binds dioxygen with low affinity and could function as an oxygen sensor but has probably no function as a respiratory oxygen carrier. In Danio rerio (Zebrafish), this protein is Cytoglobin-1 (cygb1).